A 504-amino-acid polypeptide reads, in one-letter code: Maturase K (504 aa).

It belongs to the intron maturase 2 family. MatK subfamily.

Its subcellular location is the plastid. The protein localises to the chloroplast. In terms of biological role, usually encoded in the trnK tRNA gene intron. Probably assists in splicing its own and other chloroplast group II introns. The protein is Maturase K of Nepenthes gracilis (Slender pitcher plant).